We begin with the raw amino-acid sequence, 417 residues long: Gamma-glutamyl phosphate reductase (417 aa).

Belongs to the gamma-glutamyl phosphate reductase family.

It is found in the cytoplasm. The catalysed reaction is L-glutamate 5-semialdehyde + phosphate + NADP(+) = L-glutamyl 5-phosphate + NADPH + H(+). The protein operates within amino-acid biosynthesis; L-proline biosynthesis; L-glutamate 5-semialdehyde from L-glutamate: step 2/2. Catalyzes the NADPH-dependent reduction of L-glutamate 5-phosphate into L-glutamate 5-semialdehyde and phosphate. The product spontaneously undergoes cyclization to form 1-pyrroline-5-carboxylate. The polypeptide is Gamma-glutamyl phosphate reductase (Bacteroides thetaiotaomicron (strain ATCC 29148 / DSM 2079 / JCM 5827 / CCUG 10774 / NCTC 10582 / VPI-5482 / E50)).